A 59-amino-acid polypeptide reads, in one-letter code: UPF0434 protein SO_2800 (59 aa).

Belongs to the UPF0434 family.

This Shewanella oneidensis (strain ATCC 700550 / JCM 31522 / CIP 106686 / LMG 19005 / NCIMB 14063 / MR-1) protein is UPF0434 protein SO_2800.